We begin with the raw amino-acid sequence, 250 residues long: 3-deoxy-manno-octulosonate cytidylyltransferase (250 aa).

The protein belongs to the KdsB family.

It localises to the cytoplasm. The enzyme catalyses 3-deoxy-alpha-D-manno-oct-2-ulosonate + CTP = CMP-3-deoxy-beta-D-manno-octulosonate + diphosphate. It participates in nucleotide-sugar biosynthesis; CMP-3-deoxy-D-manno-octulosonate biosynthesis; CMP-3-deoxy-D-manno-octulosonate from 3-deoxy-D-manno-octulosonate and CTP: step 1/1. The protein operates within bacterial outer membrane biogenesis; lipopolysaccharide biosynthesis. Functionally, activates KDO (a required 8-carbon sugar) for incorporation into bacterial lipopolysaccharide in Gram-negative bacteria. This is 3-deoxy-manno-octulosonate cytidylyltransferase from Xanthomonas campestris pv. campestris (strain 8004).